A 309-amino-acid chain; its full sequence is Glutaminase (309 aa).

7 residues coordinate substrate: Ser-64, Asn-114, Glu-160, Asn-167, Tyr-191, Tyr-243, and Val-261.

Belongs to the glutaminase family. In terms of assembly, homotetramer.

It catalyses the reaction L-glutamine + H2O = L-glutamate + NH4(+). The polypeptide is Glutaminase (Rhodopseudomonas palustris (strain BisB18)).